We begin with the raw amino-acid sequence, 225 residues long: UPF0758 protein Sama_0327 (225 aa).

The region spanning 102–224 (VLTSPDLTRD…IVSFAERGWI (123 aa)) is the MPN domain. Zn(2+)-binding residues include His-173, His-175, and Asp-186. The JAMM motif signature appears at 173–186 (HNHPSGVAEPSQAD).

Belongs to the UPF0758 family.

This chain is UPF0758 protein Sama_0327, found in Shewanella amazonensis (strain ATCC BAA-1098 / SB2B).